The sequence spans 592 residues: Threonine dehydratase biosynthetic, chloroplastic (592 aa).

A chloroplast-targeting transit peptide spans 1–91 (MNSVQLPTAQ…NEAENGSIAE (91 aa)). An N6-(pyridoxal phosphate)lysine modification is found at Lys-141. ACT-like domains follow at residues 419-490 (AVLA…NLTT) and 512-583 (VLCR…LVSD).

The protein belongs to the serine/threonine dehydratase family. Pyridoxal 5'-phosphate is required as a cofactor.

Its subcellular location is the plastid. It is found in the chloroplast. The catalysed reaction is L-threonine = 2-oxobutanoate + NH4(+). Its pathway is amino-acid biosynthesis; L-isoleucine biosynthesis; 2-oxobutanoate from L-threonine: step 1/1. Allosterically inhibited by isoleucine. Strain GM11b is isoleucine feedback insensitive and is resistant to the antimetabolite L-O-methylthreonine. Functionally, catalyzes the formation of alpha-ketobutyrate from threonine in a two-step reaction. The first step is a dehydration of threonine, followed by rehydration and liberation of ammonia. This Arabidopsis thaliana (Mouse-ear cress) protein is Threonine dehydratase biosynthetic, chloroplastic (OMR1).